A 202-amino-acid chain; its full sequence is CASP-like protein 2B1 (202 aa).

Over 1–29 (MSYLGVGVSPGNVPVYHGSNLKVIDKRVR) the chain is Cytoplasmic. A helical transmembrane segment spans residues 30 to 50 (LAELVLRCLICGLGVLAAVLV). Residues 51 to 72 (GTDTQVKEIFSIQKKARFTDMK) are Extracellular-facing. The chain crosses the membrane as a helical span at residues 73–93 (ALVFLVIANGIAAAYSLLQGV). At 94–109 (RCVVGMVRGSALFSKP) the chain is on the cytoplasmic side. The helical transmembrane segment at 110–130 (LAWAIFSGDQMMAYLTVAAVA) threads the bilayer. Residues 131 to 164 (AAAQSAVFAKLGQPELQWMKICNMYGKFCNQVGE) lie on the Extracellular side of the membrane. Residues 165 to 185 (GIASALLVSVSMVVLSCISAF) traverse the membrane as a helical segment. At 186–202 (SLFRLYGANKGKDCTRW) the chain is on the cytoplasmic side.

Belongs to the Casparian strip membrane proteins (CASP) family. In terms of assembly, homodimer and heterodimers.

The protein resides in the cell membrane. This chain is CASP-like protein 2B1, found in Ricinus communis (Castor bean).